The chain runs to 295 residues: 4-hydroxybenzoate octaprenyltransferase (295 aa).

8 helical membrane passes run 28 to 48 (PIGI…AADG), 55 to 75 (VLIF…INDF), 103 to 123 (WALF…TDPF), 147 to 167 (LPQL…FTAA), 175 to 195 (AWLI…YYAM), 219 to 239 (AIIL…GMRL), 241 to 261 (LGPY…WEFV), and 275 to 295 (FLHN…DYGI).

It belongs to the UbiA prenyltransferase family. It depends on Mg(2+) as a cofactor.

It localises to the cell inner membrane. It catalyses the reaction all-trans-octaprenyl diphosphate + 4-hydroxybenzoate = 4-hydroxy-3-(all-trans-octaprenyl)benzoate + diphosphate. It functions in the pathway cofactor biosynthesis; ubiquinone biosynthesis. Its function is as follows. Catalyzes the prenylation of para-hydroxybenzoate (PHB) with an all-trans polyprenyl group. Mediates the second step in the final reaction sequence of ubiquinone-8 (UQ-8) biosynthesis, which is the condensation of the polyisoprenoid side chain with PHB, generating the first membrane-bound Q intermediate 3-octaprenyl-4-hydroxybenzoate. In Azotobacter vinelandii (strain DJ / ATCC BAA-1303), this protein is 4-hydroxybenzoate octaprenyltransferase.